A 249-amino-acid chain; its full sequence is Vesicle-associated membrane protein-associated protein A (249 aa).

Alanine 2 is modified (N-acetylalanine). The Cytoplasmic segment spans residues 2–227; the sequence is ASASGTMAKH…VSFRENVTSP (226 aa). An MSP domain is found at 14-131; that stretch reads ILVLDPPTDL…MDSKLRCVFE (118 aa). Residues 50–53 are phosphorylated FFAT motif binding; it reads KVKT. N6-acetyllysine is present on lysine 125. Residue serine 166 is modified to Phosphoserine. Residues 169–205 adopt a coiled-coil conformation; it reads DTETRKLVEECKRLQGEMMKLSEENRLLRDEGLRLRK. At threonine 170 the chain carries Phosphothreonine. Residues serine 214, serine 216, and serine 219 each carry the phosphoserine modification. The helical; Anchor for type IV membrane protein transmembrane segment at 228-248 threads the bilayer; that stretch reads LPSLLVVIAAIFIGFFLGKFI.

This sequence belongs to the VAMP-associated protein (VAP) (TC 9.B.17) family. In terms of assembly, homodimer; disulfide-linked. Heterodimer with VAPB. Interacts with VAMP1, VAMP2, STX1A, BET1, SEC22C and with the C-terminal domain of OCLN. Interacts (via MSP domain) with OSBPL1A (via FFAT motif). Interacts (via MSP domain) with ZFYVE27; may retain ZFYVE27 in the endoplasmic reticulum and regulate its function in cell projections formation. Interacts with OSBP. Interacts (via C-terminus) with RSAD2/viperin (via C-terminus). Interacts with IFITM3. Interacts with OSBPL3 (phosphorylated form). Interacts with KIF5A in a ZFYVE27-dependent manner. Interacts (via MSP domain) with STARD3 (via phosphorylated FFAT motif); this interaction recruits VAPA to the endosome. Interacts with STARD3NL (via FFAT motif). Interacts with CERT1. Interacts with PLEKHA3 and SACM1L to form a ternary complex. Interacts with VPS13A (via FFAT motif). Interacts with RB1CC1 (via phosphorylated FFAT motif), MIGA2 (via phosphorylated FFAT motif), RMDN3 (via phosphorylated FFAT motif), KCNB1 (via phosphorylated FFAT motif) and KCNB2 (via phosphorylated FFAT motif). Interacts (via MSP domain) with WDR44 (via FFAT-like motif); the interactions connect the endoplasmic reticulum (ER) with the endosomal tubule.

It localises to the endoplasmic reticulum membrane. The protein localises to the cell junction. It is found in the tight junction. The protein resides in the cell membrane. Endoplasmic reticulum (ER)-anchored protein that mediates the formation of contact sites between the ER and endosomes via interaction with FFAT motif-containing proteins such as STARD3 or WDR44. STARD3-VAPA interaction enables cholesterol transfer from the ER to endosomes. Via interaction with WDR44 participates in neosynthesized protein export. In addition, recruited to the plasma membrane through OSBPL3 binding. The OSBPL3-VAPA complex stimulates RRAS signaling which in turn attenuates integrin beta-1 (ITGB1) activation at the cell surface. With OSBPL3, may regulate ER morphology. May play a role in vesicle trafficking. This is Vesicle-associated membrane protein-associated protein A from Bos taurus (Bovine).